A 301-amino-acid chain; its full sequence is Probable alpha-L-glutamate ligase (301 aa).

The ATP-grasp domain maps to 104–287 (LQLLSRRGIG…VAGMIIGYLE (184 aa)). Residues Lys141, 178–179 (EY), Asp187, and 211–213 (RSN) each bind ATP. The Mg(2+) site is built by Asp248, Glu260, and Asn262. Residues Asp248, Glu260, and Asn262 each contribute to the Mn(2+) site.

Belongs to the RimK family. Requires Mg(2+) as cofactor. Mn(2+) serves as cofactor.

The chain is Probable alpha-L-glutamate ligase from Pseudomonas syringae pv. syringae (strain B728a).